The sequence spans 379 residues: UDP-4-amino-4-deoxy-L-arabinose--oxoglutarate aminotransferase (379 aa).

Residue Lys182 is modified to N6-(pyridoxal phosphate)lysine.

The protein belongs to the DegT/DnrJ/EryC1 family. ArnB subfamily. In terms of assembly, homodimer. The cofactor is pyridoxal 5'-phosphate.

It catalyses the reaction UDP-4-amino-4-deoxy-beta-L-arabinose + 2-oxoglutarate = UDP-beta-L-threo-pentopyranos-4-ulose + L-glutamate. Its pathway is nucleotide-sugar biosynthesis; UDP-4-deoxy-4-formamido-beta-L-arabinose biosynthesis; UDP-4-deoxy-4-formamido-beta-L-arabinose from UDP-alpha-D-glucuronate: step 2/3. The protein operates within bacterial outer membrane biogenesis; lipopolysaccharide biosynthesis. Catalyzes the conversion of UDP-4-keto-arabinose (UDP-Ara4O) to UDP-4-amino-4-deoxy-L-arabinose (UDP-L-Ara4N). The modified arabinose is attached to lipid A and is required for resistance to polymyxin and cationic antimicrobial peptides. This chain is UDP-4-amino-4-deoxy-L-arabinose--oxoglutarate aminotransferase, found in Escherichia coli O127:H6 (strain E2348/69 / EPEC).